The chain runs to 161 residues: Glycine cleavage system H protein 2 (161 aa).

The Lipoyl-binding domain occupies 34 to 116 (TVTVGVTDIG…YGEGWIAKLK (83 aa)). Lysine 75 bears the N6-lipoyllysine mark.

This sequence belongs to the GcvH family. In terms of assembly, the glycine cleavage system is composed of four proteins: P, T, L and H. (R)-lipoate serves as cofactor.

Functionally, the glycine cleavage system catalyzes the degradation of glycine. The H protein shuttles the methylamine group of glycine from the P protein to the T protein. In Aquifex aeolicus (strain VF5), this protein is Glycine cleavage system H protein 2.